A 225-amino-acid chain; its full sequence is PKHD-type hydroxylase YbiX (225 aa).

The Fe2OG dioxygenase domain maps to T78–S177. 3 residues coordinate Fe cation: H96, D98, and H158. R168 is a 2-oxoglutarate binding site.

The cofactor is Fe(2+). It depends on L-ascorbate as a cofactor.

This Escherichia fergusonii (strain ATCC 35469 / DSM 13698 / CCUG 18766 / IAM 14443 / JCM 21226 / LMG 7866 / NBRC 102419 / NCTC 12128 / CDC 0568-73) protein is PKHD-type hydroxylase YbiX.